The chain runs to 152 residues: Deoxyuridine 5'-triphosphate nucleotidohydrolase (152 aa).

Substrate is bound by residues arginine 71 to glycine 73, asparagine 84, leucine 88 to aspartate 90, and methionine 98.

This sequence belongs to the dUTPase family. Mg(2+) serves as cofactor.

The enzyme catalyses dUTP + H2O = dUMP + diphosphate + H(+). Its pathway is pyrimidine metabolism; dUMP biosynthesis; dUMP from dCTP (dUTP route): step 2/2. Functionally, this enzyme is involved in nucleotide metabolism: it produces dUMP, the immediate precursor of thymidine nucleotides and it decreases the intracellular concentration of dUTP so that uracil cannot be incorporated into DNA. This is Deoxyuridine 5'-triphosphate nucleotidohydrolase from Photorhabdus laumondii subsp. laumondii (strain DSM 15139 / CIP 105565 / TT01) (Photorhabdus luminescens subsp. laumondii).